The chain runs to 157 residues: Dihydrofolate reductase type 5 (157 aa).

Residues 2–156 (KVSLMAAKAK…INYCYQIWQK (155 aa)) enclose the DHFR domain.

It belongs to the dihydrofolate reductase family. As to quaternary structure, homodimer.

It carries out the reaction (6S)-5,6,7,8-tetrahydrofolate + NADP(+) = 7,8-dihydrofolate + NADPH + H(+). It functions in the pathway cofactor biosynthesis; tetrahydrofolate biosynthesis; 5,6,7,8-tetrahydrofolate from 7,8-dihydrofolate: step 1/1. Functionally, key enzyme in folate metabolism. Catalyzes an essential reaction for de novo glycine and purine synthesis, and for DNA precursor synthesis. The polypeptide is Dihydrofolate reductase type 5 (dhfrV) (Escherichia coli).